The primary structure comprises 324 residues: Phospho-N-acetylmuramoyl-pentapeptide-transferase (324 aa).

Transmembrane regions (helical) follow at residues 5-25 (VILF…PIFI), 51-71 (TPTM…IVMI), 77-97 (ISPE…LGFL), 117-137 (LIGQ…YQFA), 147-167 (VSFD…VGGS), 176-196 (LDGL…ILAW), 203-223 (VAIF…FNAH), 227-248 (VFMG…AILT), and 302-322 (VVVT…YIEV).

It belongs to the glycosyltransferase 4 family. MraY subfamily. Requires Mg(2+) as cofactor.

It is found in the cell membrane. The enzyme catalyses UDP-N-acetyl-alpha-D-muramoyl-L-alanyl-gamma-D-glutamyl-meso-2,6-diaminopimeloyl-D-alanyl-D-alanine + di-trans,octa-cis-undecaprenyl phosphate = di-trans,octa-cis-undecaprenyl diphospho-N-acetyl-alpha-D-muramoyl-L-alanyl-D-glutamyl-meso-2,6-diaminopimeloyl-D-alanyl-D-alanine + UMP. It functions in the pathway cell wall biogenesis; peptidoglycan biosynthesis. Functionally, catalyzes the initial step of the lipid cycle reactions in the biosynthesis of the cell wall peptidoglycan: transfers peptidoglycan precursor phospho-MurNAc-pentapeptide from UDP-MurNAc-pentapeptide onto the lipid carrier undecaprenyl phosphate, yielding undecaprenyl-pyrophosphoryl-MurNAc-pentapeptide, known as lipid I. The polypeptide is Phospho-N-acetylmuramoyl-pentapeptide-transferase (Bacillus pumilus (strain SAFR-032)).